The following is a 500-amino-acid chain: Protein-tyrosine sulfotransferase (500 aa).

Positions 1–24 (MQMNSVWKLSLGLLLLSSVIGSFA) are cleaved as a signal peptide. Residues 25–467 (ELDFGHCETL…SVLGEMGEEK (443 aa)) lie on the Lumenal side of the membrane. Catalysis depends on residues R121 and E142. Residues N156, N248, N315, N343, N359, and N395 are each glycosylated (N-linked (GlcNAc...) asparagine). A helical transmembrane segment spans residues 468 to 488 (LWKFVPVALMLLLIVLFFLFV). Residues 489 to 500 (NAKRRRTSKVKI) lie on the Cytoplasmic side of the membrane.

In terms of tissue distribution, expressed throughout the plant body, highest levels of expression are in the root apical meristem.

It localises to the golgi apparatus membrane. The enzyme catalyses L-tyrosyl-[protein] + 3'-phosphoadenylyl sulfate = O-sulfo-L-tyrosine-[protein] + adenosine 3',5'-bisphosphate + H(+). Its function is as follows. Catalyzes the O-sulfation of tyrosine residues within acidic motifs of polypeptides. The protein is Protein-tyrosine sulfotransferase (TPST) of Arabidopsis thaliana (Mouse-ear cress).